The chain runs to 506 residues: Histidine ammonia-lyase (506 aa).

The 5-imidazolinone (Ala-Gly) cross-link spans 143–145 (ASG). A 2,3-didehydroalanine (Ser) modification is found at serine 144.

This sequence belongs to the PAL/histidase family. Post-translationally, contains an active site 4-methylidene-imidazol-5-one (MIO), which is formed autocatalytically by cyclization and dehydration of residues Ala-Ser-Gly.

Its subcellular location is the cytoplasm. The enzyme catalyses L-histidine = trans-urocanate + NH4(+). Its pathway is amino-acid degradation; L-histidine degradation into L-glutamate; N-formimidoyl-L-glutamate from L-histidine: step 1/3. In Salmonella schwarzengrund (strain CVM19633), this protein is Histidine ammonia-lyase.